The following is a 447-amino-acid chain: tRNA-2-methylthio-N(6)-dimethylallyladenosine synthase (447 aa).

The MTTase N-terminal domain maps to 14–130 (KKVYIRTFGC…LPAMIANAGQ (117 aa)). [4Fe-4S] cluster is bound by residues Cys23, Cys59, Cys93, Cys166, Cys170, and Cys173. The Radical SAM core domain occupies 152–382 (RSGTISAFIP…IALQGSISGE (231 aa)). A TRAM domain is found at 385-447 (AAEVGAVVEV…TPATLIGTPA (63 aa)).

It belongs to the methylthiotransferase family. MiaB subfamily. As to quaternary structure, monomer. [4Fe-4S] cluster is required as a cofactor.

The protein resides in the cytoplasm. It catalyses the reaction N(6)-dimethylallyladenosine(37) in tRNA + (sulfur carrier)-SH + AH2 + 2 S-adenosyl-L-methionine = 2-methylsulfanyl-N(6)-dimethylallyladenosine(37) in tRNA + (sulfur carrier)-H + 5'-deoxyadenosine + L-methionine + A + S-adenosyl-L-homocysteine + 2 H(+). Its function is as follows. Catalyzes the methylthiolation of N6-(dimethylallyl)adenosine (i(6)A), leading to the formation of 2-methylthio-N6-(dimethylallyl)adenosine (ms(2)i(6)A) at position 37 in tRNAs that read codons beginning with uridine. The chain is tRNA-2-methylthio-N(6)-dimethylallyladenosine synthase from Chlorobium phaeobacteroides (strain BS1).